The primary structure comprises 212 residues: Leucine efflux protein (212 aa).

6 consecutive transmembrane segments (helical) span residues 12-32 (TYLVGAIFIVLVPGPNTLFVL), 49-69 (GVFIGDAVLMFLAWAGVATLI), 71-91 (TTPILFNIVRYLGAFYLLYLG), 122-142 (ILSLTNPKAILFYVSFFVQFI), 153-173 (FFILATTLELVSFCYLSFLII), and 188-208 (LAKVGNSLIGLMFVGFAARLA).

The protein belongs to the Rht family.

It is found in the cell inner membrane. It carries out the reaction L-leucine(in) + H(+)(out) = L-leucine(out) + H(+)(in). Functionally, exporter of leucine. The polypeptide is Leucine efflux protein (leuE) (Shigella sonnei (strain Ss046)).